The primary structure comprises 100 residues: Putative sodium channel toxin Ts26 (100 aa).

The signal sequence occupies residues 1–22; it reads MVKSAMKIVILILFVLLIRVES. The 69-residue stretch at 24-92 folds into the LCN-type CS-alpha/beta domain; that stretch reads RNGYPDISDG…VMDTTIEYCE (69 aa). Intrachain disulfides connect C38–C64, C50–C69, C54–C71, and C65–C91.

It belongs to the long (4 C-C) scorpion toxin superfamily. Sodium channel inhibitor family. As to expression, expressed by the venom gland.

The protein localises to the secreted. Putative sodium channel toxin. The sequence is that of Putative sodium channel toxin Ts26 from Tityus serrulatus (Brazilian scorpion).